The primary structure comprises 228 residues: Rab-like protein 2A (228 aa).

GTP is bound by residues Gly-28–Ser-35, Asp-76–Gln-80, and Asn-133–Asp-136. Residues Leu-200 to Ser-228 are disordered.

This sequence belongs to the small GTPase superfamily. Rab family. Interacts with IFT27, IFT81, IFT172, ATP6V1E1, HK1, LDHC, MAPRE1 and HSPA2. In terms of tissue distribution, expressed in the testis.

Its function is as follows. Plays an essential role in male fertility, sperm intra-flagellar transport, and tail assembly. Binds, in a GTP-regulated manner, to a specific set of effector proteins including key proteins involved in cilia development and function and delivers them into the growing sperm tail. The protein is Rab-like protein 2A (RABL2A) of Homo sapiens (Human).